Here is a 277-residue protein sequence, read N- to C-terminus: DNA polymerase epsilon subunit C (277 aa).

2 stretches are compositionally biased toward polar residues: residues 1–16 and 24–39; these read MSSP…SQVA and ETPS…TNTP. The tract at residues 1–91 is disordered; the sequence is MSSPMPQSSL…EEEEEEESLS (91 aa). Positions 69–89 are enriched in acidic residues; the sequence is ENEDDDEQEEEEEEEEEEEES.

As to quaternary structure, heterotetramer. Consists of four subunits: POL2, DPB2, DPB3 and DPB4.

It is found in the nucleus. As accessory component of the DNA polymerase epsilon (DNA polymerase II) participates in chromosomal DNA replication. This is DNA polymerase epsilon subunit C (DPB3) from Debaryomyces hansenii (strain ATCC 36239 / CBS 767 / BCRC 21394 / JCM 1990 / NBRC 0083 / IGC 2968) (Yeast).